The sequence spans 138 residues: Histone H2B (138 aa).

Residues 1-10 are compositionally biased toward basic and acidic residues; it reads MPPKAAEKKP. Residues 1 to 47 are disordered; it reads MPPKAAEKKPSTAGKAPAGKAPEKKEAGKKTTAAGGEKKKRSKTRKE. 2 positions are modified to N6-acetyllysine; alternate: lysine 8 and lysine 9. Residues lysine 8 and lysine 9 each participate in a glycyl lysine isopeptide (Lys-Gly) (interchain with G-Cter in SUMO); alternate cross-link. Over residues 11 to 20 the composition is skewed to low complexity; sequence STAGKAPAGK. Residue lysine 15 is modified to N6-acetyllysine. Lysine 24 carries the post-translational modification N6-acetyllysine; alternate. A Glycyl lysine isopeptide (Lys-Gly) (interchain with G-Cter in SUMO); alternate cross-link involves residue lysine 24. Lysine 25 is covalently cross-linked (Glycyl lysine isopeptide (Lys-Gly) (interchain with G-Cter in SUMO)). A Glycyl lysine isopeptide (Lys-Gly) (interchain with G-Cter in ubiquitin) cross-link involves residue lysine 132.

It belongs to the histone H2B family. In terms of assembly, the nucleosome is a histone octamer containing two molecules each of H2A, H2B, H3 and H4 assembled in one H3-H4 heterotetramer and two H2A-H2B heterodimers. The octamer wraps approximately 147 bp of DNA. Post-translationally, monoubiquitinated to form H2BK123ub1. H2BK123ub1 gives a specific tag for epigenetic transcriptional activation and is also prerequisite for H3K4me and H3K79me formation. H2BK123ub1 also modulates the formation of double-strand breaks during meiosis and is a prerequisite for DNA-damage checkpoint activation. In terms of processing, acetylated by GCN5 to form H2BK11ac and H2BK16ac. H2BK16ac can also be formed by ESA1. Acetylation of N-terminal lysines and particularly formation of H2BK11acK16ac has a positive effect on transcription. Sumoylation to form H2BK6su or H2BK7su, and probably also H2BK16su or H2BK17su, occurs preferentially near the telomeres and represses gene transcription.

The protein resides in the nucleus. Its subcellular location is the chromosome. Core component of nucleosome. Nucleosomes wrap and compact DNA into chromatin, limiting DNA accessibility to the cellular machineries which require DNA as a template. Histones thereby play a central role in transcription regulation, DNA repair, DNA replication and chromosomal stability. DNA accessibility is regulated via a complex set of post-translational modifications of histones, also called histone code, and nucleosome remodeling. The polypeptide is Histone H2B (HTB1) (Ajellomyces capsulatus (Darling's disease fungus)).